The sequence spans 300 residues: GTPase Era (300 aa).

The 169-residue stretch at 7–175 (YCGFIAIVGR…EKFVRESLKE (169 aa)) folds into the Era-type G domain. The segment at 15–22 (GRPNVGKS) is G1. 15–22 (GRPNVGKS) contributes to the GTP binding site. A G2 region spans residues 41–45 (QTTRH). Positions 62 to 65 (DTPG) are G3. GTP contacts are provided by residues 62–66 (DTPGL) and 124–127 (NKVD). Residues 124–127 (NKVD) form a G4 region. The G5 stretch occupies residues 154 to 156 (ISA). Residues 206–283 (MGEELPYSVT…HLELWVKVKA (78 aa)) form the KH type-2 domain.

Belongs to the TRAFAC class TrmE-Era-EngA-EngB-Septin-like GTPase superfamily. Era GTPase family. Monomer.

The protein resides in the cytoplasm. It localises to the cell inner membrane. In terms of biological role, an essential GTPase that binds both GDP and GTP, with rapid nucleotide exchange. Plays a role in 16S rRNA processing and 30S ribosomal subunit biogenesis and possibly also in cell cycle regulation and energy metabolism. This is GTPase Era from Glaesserella parasuis serovar 5 (strain SH0165) (Haemophilus parasuis).